The primary structure comprises 859 residues: Sulfate permease 1 (859 aa).

Asn51 and Asn93 each carry an N-linked (GlcNAc...) asparagine glycan. 8 helical membrane-spanning segments follow: residues 94–114, 116–136, 148–168, 173–193, 206–226, 234–254, 292–312, and 332–352; these read LTAKSAGSYLVSLFPIIKWFP, YNFTWGYADLVAGITVGCVLV, LSPEYGLYSSFIGAFIYSLFA, VCIGPVAVMSLQTAKVIAEVL, PIIATTLCLLCGIVATGLGIL, LISLNAVAGFMTGSAFNIIWG, FGLIPLVILYVWKWWCGTFGI, and FYFYAQAMRNAVVIVVFTAIS. 2 N-linked (GlcNAc...) asparagine glycosylation sites follow: Asn358 and Asn391. A run of 4 helical transmembrane segments spans residues 395-415, 428-448, 468-488, and 525-545; these read EIPASIIVLVLEHIAISKSFG, LIAIGVTNLIGTFFHSYPATG, VFTGGCVLLALYCLTDAFFFI, and FIVTVFITVFSSIENGIYFAM. Residues Asn630, Asn653, and Asn718 are each glycosylated (N-linked (GlcNAc...) asparagine). In terms of domain architecture, STAS spans 630–808; sequence NTTVRPPPPG…SIIAGHSSFH (179 aa).

The protein belongs to the SLC26A/SulP transporter (TC 2.A.53) family.

The protein localises to the membrane. High affinity uptake of sulfate into the cell. The sequence is that of Sulfate permease 1 (SUL1) from Saccharomyces cerevisiae (strain ATCC 204508 / S288c) (Baker's yeast).